We begin with the raw amino-acid sequence, 28 residues long: uncharacterized protein (28 aa).

This is an uncharacterized protein from Saccharomyces cerevisiae (strain ATCC 204508 / S288c) (Baker's yeast).